A 261-amino-acid chain; its full sequence is Glutamate racemase (261 aa).

Substrate-binding positions include 12–13 (DS) and 44–45 (YG). Cys-76 functions as the Proton donor/acceptor in the catalytic mechanism. 77 to 78 (NT) contacts substrate. Cys-180 (proton donor/acceptor) is an active-site residue. A substrate-binding site is contributed by 181-182 (TH).

This sequence belongs to the aspartate/glutamate racemases family.

It carries out the reaction L-glutamate = D-glutamate. It participates in cell wall biogenesis; peptidoglycan biosynthesis. In terms of biological role, provides the (R)-glutamate required for cell wall biosynthesis. In Borreliella burgdorferi (strain ATCC 35210 / DSM 4680 / CIP 102532 / B31) (Borrelia burgdorferi), this protein is Glutamate racemase.